The chain runs to 435 residues: MKTTYVNATIVTMNEQNEVIENGYIIVENDQIIDVKSGEFANDFEVDEVIDMKGKWVLPGLVNTHTHVVMSLLRGIGDDMLLQPWLETRIWPLESQFTPELAVASTELGLLEMVKSGTTSFSDMFNPIGVDQDAIMETVSRSGMRAAVSRTLFSFGTKDDEKKAIEEAEKYVKRYYNESDMLTTMVAPHSPYTCSTELLEECARIAVENQTMVHIHLSETEREVRDIEAQYGKRPVEYAASCGLFKRPTVIAHGVVLNDDERAFLAEHDVRVAHNPNSNLKLGSGIANVKAMLEAGIKVGIATDSVASNNNLDMFEEMRIATLLQKGIHQDATALPVETALSLATKGAAEVIGMKQTGSLEAGKCADFITIDPSNKPHLQPADEVLSHLVYAASGKDISDVIINGKHVVWNGECKTLDEERIIFEASRYKRGLQR.

Positions 65 and 67 each coordinate Zn(2+). Positions 94, 150, and 189 each coordinate substrate. His216 serves as a coordination point for Zn(2+). Substrate contacts are provided by Glu219 and Asp304. Asp304 lines the Zn(2+) pocket.

The protein belongs to the metallo-dependent hydrolases superfamily. MTA/SAH deaminase family. The cofactor is Zn(2+).

It catalyses the reaction S-adenosyl-L-homocysteine + H2O + H(+) = S-inosyl-L-homocysteine + NH4(+). The catalysed reaction is S-methyl-5'-thioadenosine + H2O + H(+) = S-methyl-5'-thioinosine + NH4(+). Its function is as follows. Catalyzes the deamination of 5-methylthioadenosine and S-adenosyl-L-homocysteine into 5-methylthioinosine and S-inosyl-L-homocysteine, respectively. Is also able to deaminate adenosine. The sequence is that of 5-methylthioadenosine/S-adenosylhomocysteine deaminase from Bacillus cereus (strain ATCC 14579 / DSM 31 / CCUG 7414 / JCM 2152 / NBRC 15305 / NCIMB 9373 / NCTC 2599 / NRRL B-3711).